The chain runs to 98 residues: NADH-ubiquinone oxidoreductase chain 4L (98 aa).

A run of 3 helical transmembrane segments spans residues 1-21 (MTPT…GMLT), 29-49 (SLLC…LIAL), and 61-81 (IILL…LVSI).

The protein belongs to the complex I subunit 4L family. Core subunit of respiratory chain NADH dehydrogenase (Complex I) which is composed of 45 different subunits.

It localises to the mitochondrion inner membrane. The catalysed reaction is a ubiquinone + NADH + 5 H(+)(in) = a ubiquinol + NAD(+) + 4 H(+)(out). Its function is as follows. Core subunit of the mitochondrial membrane respiratory chain NADH dehydrogenase (Complex I) which catalyzes electron transfer from NADH through the respiratory chain, using ubiquinone as an electron acceptor. Part of the enzyme membrane arm which is embedded in the lipid bilayer and involved in proton translocation. This Macaca pagensis (Mentawai macaque) protein is NADH-ubiquinone oxidoreductase chain 4L (MT-ND4L).